Here is a 264-residue protein sequence, read N- to C-terminus: 5'-nucleotidase SurE (264 aa).

4 residues coordinate a divalent metal cation: Asp10, Asp11, Ser43, and Asn99.

It belongs to the SurE nucleotidase family. Requires a divalent metal cation as cofactor.

The protein resides in the cytoplasm. It carries out the reaction a ribonucleoside 5'-phosphate + H2O = a ribonucleoside + phosphate. In terms of biological role, nucleotidase that shows phosphatase activity on nucleoside 5'-monophosphates. The polypeptide is 5'-nucleotidase SurE (Methanococcus maripaludis (strain C6 / ATCC BAA-1332)).